A 355-amino-acid polypeptide reads, in one-letter code: 3-dehydroquinate synthase (355 aa).

NAD(+)-binding positions include 71-76, 105-109, 129-130, Lys-142, Lys-151, and 169-172; these read EGEASK, GVVGD, TS, and TLNT. Zn(2+) contacts are provided by Glu-184, His-246, and His-263.

This sequence belongs to the sugar phosphate cyclases superfamily. Dehydroquinate synthase family. NAD(+) serves as cofactor. It depends on Co(2+) as a cofactor. The cofactor is Zn(2+).

Its subcellular location is the cytoplasm. It carries out the reaction 7-phospho-2-dehydro-3-deoxy-D-arabino-heptonate = 3-dehydroquinate + phosphate. Its pathway is metabolic intermediate biosynthesis; chorismate biosynthesis; chorismate from D-erythrose 4-phosphate and phosphoenolpyruvate: step 2/7. Its function is as follows. Catalyzes the conversion of 3-deoxy-D-arabino-heptulosonate 7-phosphate (DAHP) to dehydroquinate (DHQ). In Streptococcus mutans serotype c (strain ATCC 700610 / UA159), this protein is 3-dehydroquinate synthase.